Here is a 904-residue protein sequence, read N- to C-terminus: Nitrate reductase [NADH] 1 (904 aa).

2 stretches are compositionally biased toward polar residues: residues 1–10 (MAASVENRQF) and 39–50 (STNFQKKPNSTI). Residues 1-65 (MAASVENRQF…SSEDDDDDDE (65 aa)) form a disordered region. A compositionally biased stretch (acidic residues) spans 56-65 (SSEDDDDDDE). C183 provides a ligand contact to Mo-molybdopterin. In terms of domain architecture, Cytochrome b5 heme-binding spans 531–606 (SKMYSMSEVR…LEEFRIGELL (76 aa)). 2 residues coordinate heme: H566 and H589. The FAD-binding FR-type domain occupies 647–759 (REKIPCKLID…KGPLGHIEYQ (113 aa)). Residues 699–702 (RAYT), 716–720 (VVKIY), F721, F728, 733–735 (QMS), and T786 each bind FAD.

The protein belongs to the nitrate reductase family. As to quaternary structure, homodimer. FAD serves as cofactor. Requires heme as cofactor. The cofactor is Mo-molybdopterin.

The enzyme catalyses nitrite + NAD(+) + H2O = nitrate + NADH + H(+). Its activity is regulated as follows. Regulated by the nitrogen source and controlled by the circadian rhythm. Nitrate reductase is a key enzyme involved in the first step of nitrate assimilation in plants, fungi and bacteria. This is Nitrate reductase [NADH] 1 (NIA1) from Nicotiana tabacum (Common tobacco).